A 324-amino-acid polypeptide reads, in one-letter code: Putative GTPase PYRAB02490 (324 aa).

GTP contacts are provided by residues 52-60 (GPPGAGKST), Asp-194, and 229-231 (VAT).

It belongs to the SIMIBI class G3E GTPase family. ArgK/MeaB subfamily.

Its function is as follows. May have GTPase activity. May also bind and hydrolyze ATP. May function as chaperone. This chain is Putative GTPase PYRAB02490, found in Pyrococcus abyssi (strain GE5 / Orsay).